The sequence spans 251 residues: Protein crossbronx (251 aa).

Positions 20–176 constitute a UBC core domain; sequence QQEYKILAEY…TRENIRESLA (157 aa). A disordered region spans residues 211–251; it reads QSKHLESQSQQSNNGGNGGGGGAATGLSWVKEGEFKPLSVE. Positions 225–234 are enriched in gly residues; the sequence is GGNGGGGGAA.

It belongs to the ubiquitin-conjugating enzyme family. FTS subfamily.

The protein is Protein crossbronx (cbx) of Drosophila willistoni (Fruit fly).